The following is a 125-amino-acid chain: Glycine cleavage system H protein (125 aa).

Residues 23 to 105 enclose the Lipoyl-binding domain; sequence VSTVGITEHA…FEGGWLFKVR (83 aa). The residue at position 64 (lysine 64) is an N6-lipoyllysine.

The protein belongs to the GcvH family. The glycine cleavage system is composed of four proteins: P, T, L and H. The cofactor is (R)-lipoate.

Functionally, the glycine cleavage system catalyzes the degradation of glycine. The H protein shuttles the methylamine group of glycine from the P protein to the T protein. The protein is Glycine cleavage system H protein of Streptomyces coelicolor (strain ATCC BAA-471 / A3(2) / M145).